The primary structure comprises 150 residues: UPF0756 membrane protein ACICU_02320 (150 aa).

4 helical membrane passes run 1 to 21, 45 to 65, 83 to 103, and 115 to 135; these read MLAQFYVNLVVLLVLLICGLL, FFPYIQAHGLNLGILILTIGV, FISFKSLVAIAIGLLVAWLGG, and VVAGLLIGTVAGVALLRGVPV.

The protein belongs to the UPF0756 family.

It localises to the cell membrane. The polypeptide is UPF0756 membrane protein ACICU_02320 (Acinetobacter baumannii (strain ACICU)).